The primary structure comprises 501 residues: Uridine kinase (501 aa).

Ser-17 is modified (phosphoserine). ATP is bound at residue 63-70 (GASGSGKT). Ser-276 carries the phosphoserine modification.

The protein belongs to the uridine kinase family.

It localises to the cytoplasm. It is found in the nucleus. The catalysed reaction is uridine + ATP = UMP + ADP + H(+). It catalyses the reaction cytidine + ATP = CMP + ADP + H(+). The protein operates within pyrimidine metabolism; CTP biosynthesis via salvage pathway; CTP from cytidine: step 1/3. It participates in pyrimidine metabolism; UMP biosynthesis via salvage pathway; UMP from uridine: step 1/1. Functionally, catalyzes the conversion of uridine into UMP and cytidine into CMP in the pyrimidine salvage pathway. This chain is Uridine kinase (URK1), found in Saccharomyces cerevisiae (strain ATCC 204508 / S288c) (Baker's yeast).